The sequence spans 310 residues: tRNA-cytidine(32) 2-sulfurtransferase (310 aa).

A PP-loop motif motif is present at residues Ser-48–Ser-53. Residues Cys-123, Cys-126, and Cys-214 each contribute to the [4Fe-4S] cluster site.

It belongs to the TtcA family. In terms of assembly, homodimer. Mg(2+) serves as cofactor. Requires [4Fe-4S] cluster as cofactor.

It localises to the cytoplasm. The enzyme catalyses cytidine(32) in tRNA + S-sulfanyl-L-cysteinyl-[cysteine desulfurase] + AH2 + ATP = 2-thiocytidine(32) in tRNA + L-cysteinyl-[cysteine desulfurase] + A + AMP + diphosphate + H(+). It functions in the pathway tRNA modification. Functionally, catalyzes the ATP-dependent 2-thiolation of cytidine in position 32 of tRNA, to form 2-thiocytidine (s(2)C32). The sulfur atoms are provided by the cysteine/cysteine desulfurase (IscS) system. This is tRNA-cytidine(32) 2-sulfurtransferase from Vibrio vulnificus (strain YJ016).